Consider the following 234-residue polypeptide: Leucyl/phenylalanyl-tRNA--protein transferase (234 aa).

Belongs to the L/F-transferase family.

It localises to the cytoplasm. It catalyses the reaction N-terminal L-lysyl-[protein] + L-leucyl-tRNA(Leu) = N-terminal L-leucyl-L-lysyl-[protein] + tRNA(Leu) + H(+). It carries out the reaction N-terminal L-arginyl-[protein] + L-leucyl-tRNA(Leu) = N-terminal L-leucyl-L-arginyl-[protein] + tRNA(Leu) + H(+). The enzyme catalyses L-phenylalanyl-tRNA(Phe) + an N-terminal L-alpha-aminoacyl-[protein] = an N-terminal L-phenylalanyl-L-alpha-aminoacyl-[protein] + tRNA(Phe). Functions in the N-end rule pathway of protein degradation where it conjugates Leu, Phe and, less efficiently, Met from aminoacyl-tRNAs to the N-termini of proteins containing an N-terminal arginine or lysine. This Escherichia fergusonii (strain ATCC 35469 / DSM 13698 / CCUG 18766 / IAM 14443 / JCM 21226 / LMG 7866 / NBRC 102419 / NCTC 12128 / CDC 0568-73) protein is Leucyl/phenylalanyl-tRNA--protein transferase.